We begin with the raw amino-acid sequence, 166 residues long: 3-isopropylmalate dehydratase small subunit 1 (166 aa).

This sequence belongs to the LeuD family. LeuD type 2 subfamily. Heterodimer of LeuC and LeuD.

It carries out the reaction (2R,3S)-3-isopropylmalate = (2S)-2-isopropylmalate. It participates in amino-acid biosynthesis; L-leucine biosynthesis; L-leucine from 3-methyl-2-oxobutanoate: step 2/4. Functionally, catalyzes the isomerization between 2-isopropylmalate and 3-isopropylmalate, via the formation of 2-isopropylmaleate. This is 3-isopropylmalate dehydratase small subunit 1 (leuD1) from Thermotoga maritima (strain ATCC 43589 / DSM 3109 / JCM 10099 / NBRC 100826 / MSB8).